We begin with the raw amino-acid sequence, 150 residues long: Transcriptional repressor NrdR (150 aa).

The tract at residues 1–26 (MKCPFCGNSDSKVVDSRPDKGGSGIR) is disordered. The segment at 3–34 (CPFCGNSDSKVVDSRPDKGGSGIRRRRECEQC) is a zinc-finger region. The region spanning 49–139 (PLVLKKDGRR…VYRSFRDINE (91 aa)) is the ATP-cone domain.

Belongs to the NrdR family. Zn(2+) is required as a cofactor.

Its function is as follows. Negatively regulates transcription of bacterial ribonucleotide reductase nrd genes and operons by binding to NrdR-boxes. The chain is Transcriptional repressor NrdR from Pelobacter propionicus (strain DSM 2379 / NBRC 103807 / OttBd1).